Reading from the N-terminus, the 630-residue chain is 1-deoxy-D-xylulose-5-phosphate synthase (630 aa).

Residues histidine 72 and 113–115 (GHS) each bind thiamine diphosphate. Aspartate 144 lines the Mg(2+) pocket. Thiamine diphosphate is bound by residues 145-146 (GA), asparagine 173, tyrosine 284, and glutamate 367. Position 173 (asparagine 173) interacts with Mg(2+).

Belongs to the transketolase family. DXPS subfamily. In terms of assembly, homodimer. Mg(2+) serves as cofactor. Thiamine diphosphate is required as a cofactor.

It catalyses the reaction D-glyceraldehyde 3-phosphate + pyruvate + H(+) = 1-deoxy-D-xylulose 5-phosphate + CO2. It functions in the pathway metabolic intermediate biosynthesis; 1-deoxy-D-xylulose 5-phosphate biosynthesis; 1-deoxy-D-xylulose 5-phosphate from D-glyceraldehyde 3-phosphate and pyruvate: step 1/1. Its function is as follows. Catalyzes the acyloin condensation reaction between C atoms 2 and 3 of pyruvate and glyceraldehyde 3-phosphate to yield 1-deoxy-D-xylulose-5-phosphate (DXP). This Geobacillus thermodenitrificans (strain NG80-2) protein is 1-deoxy-D-xylulose-5-phosphate synthase.